A 424-amino-acid polypeptide reads, in one-letter code: Probable serine/threonine-protein kinase PBL15 (424 aa).

The Protein kinase domain occupies 99 to 380 (FSGNYLLGEG…AVVEALESLI (282 aa)). ATP contacts are provided by residues 105–113 (LGEGGFGKV) and Lys134. Tyr179 bears the Phosphotyrosine mark. Asp229 functions as the Proton acceptor in the catalytic mechanism. Ser233 bears the Phosphoserine mark. 2 positions are modified to phosphothreonine: Thr264 and Thr269. Phosphotyrosine is present on Tyr277. The disordered stretch occupies residues 390-424 (GHWPLSPKSQGGKVSPKVRGDHRSGRKSAPGSLRS).

Belongs to the protein kinase superfamily. Ser/Thr protein kinase family. In terms of assembly, interacts with the Xanthomonas campestris effector XopAC/AvrAC.

Its subcellular location is the cell membrane. It carries out the reaction L-seryl-[protein] + ATP = O-phospho-L-seryl-[protein] + ADP + H(+). The catalysed reaction is L-threonyl-[protein] + ATP = O-phospho-L-threonyl-[protein] + ADP + H(+). May be involved in plant defense signaling. The sequence is that of Probable serine/threonine-protein kinase PBL15 from Arabidopsis thaliana (Mouse-ear cress).